The primary structure comprises 299 residues: Acetyl-coenzyme A carboxylase carboxyl transferase subunit beta (299 aa).

A CoA carboxyltransferase N-terminal domain is found at 25-294 (VWTKCTSCEQ…PFVEPELIQE (270 aa)). Zn(2+) contacts are provided by C29, C32, C48, and C51. A C4-type zinc finger spans residues 29–51 (CTSCEQVLYRDELKRHLEVCPKC).

It belongs to the AccD/PCCB family. As to quaternary structure, acetyl-CoA carboxylase is a heterohexamer composed of biotin carboxyl carrier protein (AccB), biotin carboxylase (AccC) and two subunits each of ACCase subunit alpha (AccA) and ACCase subunit beta (AccD). The cofactor is Zn(2+).

It localises to the cytoplasm. The enzyme catalyses N(6)-carboxybiotinyl-L-lysyl-[protein] + acetyl-CoA = N(6)-biotinyl-L-lysyl-[protein] + malonyl-CoA. Its pathway is lipid metabolism; malonyl-CoA biosynthesis; malonyl-CoA from acetyl-CoA: step 1/1. In terms of biological role, component of the acetyl coenzyme A carboxylase (ACC) complex. Biotin carboxylase (BC) catalyzes the carboxylation of biotin on its carrier protein (BCCP) and then the CO(2) group is transferred by the transcarboxylase to acetyl-CoA to form malonyl-CoA. In Histophilus somni (strain 129Pt) (Haemophilus somnus), this protein is Acetyl-coenzyme A carboxylase carboxyl transferase subunit beta.